The chain runs to 447 residues: Adenylosuccinate synthetase (447 aa).

GTP is bound by residues 12-18 and 40-42; these read GDEGKGK and GHT. Residue D13 is the Proton acceptor of the active site. Residues D13 and G40 each contribute to the Mg(2+) site. IMP is bound by residues 13 to 16, 38 to 41, T128, R142, Q223, T238, and R302; these read DEGK and NAGH. H41 (proton donor) is an active-site residue. 298-304 contacts substrate; sequence TTTGRKR. Residues R304, 330–332, and 412–414 each bind GTP; these read KLD and SLG.

Belongs to the adenylosuccinate synthetase family. As to quaternary structure, homodimer. The cofactor is Mg(2+).

It is found in the cytoplasm. It carries out the reaction IMP + L-aspartate + GTP = N(6)-(1,2-dicarboxyethyl)-AMP + GDP + phosphate + 2 H(+). It participates in purine metabolism; AMP biosynthesis via de novo pathway; AMP from IMP: step 1/2. Plays an important role in the de novo pathway of purine nucleotide biosynthesis. Catalyzes the first committed step in the biosynthesis of AMP from IMP. The chain is Adenylosuccinate synthetase from Nostoc punctiforme (strain ATCC 29133 / PCC 73102).